The sequence spans 614 residues: Zinc finger protein 276 (614 aa).

The disordered stretch occupies residues Met1 to Ala46. The segment covering Gly19–Arg29 has biased composition (gly residues). The 87-residue stretch at Gly78–Gly164 folds into the ZAD domain. Positions 80, 83, 137, and 140 each coordinate Zn(2+). The disordered stretch occupies residues Arg271 to Lys422. 2 stretches are compositionally biased toward polar residues: residues Leu272 to Gly282 and Arg291 to Leu302. A compositionally biased stretch (acidic residues) spans Ser357–Glu369. The segment covering Tyr386–Lys408 has biased composition (basic and acidic residues). Residues Ile409–Lys422 are compositionally biased toward basic residues. 5 consecutive C2H2-type zinc fingers follow at residues Tyr434–His458, Arg465–His490, Tyr496–His518, Leu524–His546, and Phe554–His577. Positions Pro588–Thr614 are disordered.

In terms of tissue distribution, found in all the examined tissues, with highest levels in kidney, liver, lung, and spleen.

It localises to the nucleus. Its subcellular location is the chromosome. It is found in the centromere. The protein resides in the kinetochore. In terms of biological role, may be involved in transcriptional regulation. The polypeptide is Zinc finger protein 276 (Znf276) (Mus musculus (Mouse)).